The chain runs to 247 residues: Carboxy-S-adenosyl-L-methionine synthase (247 aa).

Residues Tyr-40, 65 to 67 (GAS), 90 to 91 (DN), 122 to 123 (DI), Asn-137, and Arg-204 each bind S-adenosyl-L-methionine.

It belongs to the class I-like SAM-binding methyltransferase superfamily. Cx-SAM synthase family. As to quaternary structure, homodimer.

The enzyme catalyses prephenate + S-adenosyl-L-methionine = carboxy-S-adenosyl-L-methionine + 3-phenylpyruvate + H2O. Functionally, catalyzes the conversion of S-adenosyl-L-methionine (SAM) to carboxy-S-adenosyl-L-methionine (Cx-SAM). The sequence is that of Carboxy-S-adenosyl-L-methionine synthase from Ectopseudomonas mendocina (strain ymp) (Pseudomonas mendocina).